The chain runs to 418 residues: L-rhamnose isomerase (418 aa).

Mn(2+)-binding residues include His262, Asp294, and Asp296.

Belongs to the rhamnose isomerase family. Homotetramer. Mn(2+) serves as cofactor.

Its subcellular location is the cytoplasm. The catalysed reaction is L-rhamnopyranose = L-rhamnulose. It functions in the pathway carbohydrate degradation; L-rhamnose degradation; glycerone phosphate from L-rhamnose: step 1/3. In terms of biological role, catalyzes the interconversion of L-rhamnose and L-rhamnulose. The polypeptide is L-rhamnose isomerase (Cronobacter sakazakii (strain ATCC BAA-894) (Enterobacter sakazakii)).